The sequence spans 1183 residues: LRR receptor-like serine/threonine-protein kinase FLS2 (1183 aa).

The first 41 residues, 1–41, serve as a signal peptide directing secretion; it reads MERNKFASKMSQHYTKTICIAVVLVAVLFSLSSAAAAGSGA. At 42 to 809 the chain is on the extracellular side; sequence AVSVQLEALL…GKKRVFSRTG (768 aa). A disulfide bridge links cysteine 87 with cysteine 94. Asparagine 88 and asparagine 120 each carry an N-linked (GlcNAc...) asparagine glycan. LRR repeat units lie at residues 97-120, 121-145, 147-169, 171-193, 194-217, 218-241, 242-265, 267-289, 290-313, 315-337, 338-361, 363-385, and 386-409; these read AGQV…FLGN, ISTL…LGRL, ELEQ…LCNC, AMWA…IGDL, SNLE…MAKL, KGIM…IGDL, SNLQ…LGRC, NLTL…LGEL, TNLE…LRRC, SLLN…LGEL, PSLQ…LTNL, NLTI…IGSL, and RNLR…ISNC. Cysteines 167 and 189 form a disulfide. Asparagine 168 and asparagine 181 each carry an N-linked (GlcNAc...) asparagine glycan. Asparagine 267 carries an N-linked (GlcNAc...) asparagine glycan. Asparagine 363, asparagine 395, asparagine 408, and asparagine 414 each carry an N-linked (GlcNAc...) asparagine glycan. LRR repeat units follow at residues 433 to 457, 459 to 480, 481 to 505, 507 to 529, 530 to 553, 555 to 577, 578 to 600, 601 to 625, 627 to 651, 652 to 675, 676 to 699, 701 to 724, 725 to 748, and 749 to 773; these read LQSL…LFDC, QLQK…LVGQ, LGNL…IGNM, KLIS…ISNM, SSLQ…VFEL, QLTI…VANL, RSLS…ALGR, LDQL…VIAS, SNVQ…IGGL, VMVQ…LAGC, KNLY…LFPQ, DLLT…IAAL, KHIQ…LANL, and TALR…VFRN. Residues asparagine 483, asparagine 504, and asparagine 528 are each glycosylated (N-linked (GlcNAc...) asparagine). Asparagine 591 carries an N-linked (GlcNAc...) asparagine glycan. An N-linked (GlcNAc...) asparagine glycan is attached at asparagine 634. N-linked (GlcNAc...) asparagine glycosylation is found at asparagine 707, asparagine 747, asparagine 755, and asparagine 773. A helical transmembrane segment spans residues 810–830; it reads LVILVVLIALSTLLLLMVATI. The Cytoplasmic portion of the chain corresponds to 831 to 1183; that stretch reads LLVSYRRYRR…LKMSKLVGED (353 aa). A Protein kinase domain is found at 876-1179; sequence FDQGNVIGSS…LSSLLKMSKL (304 aa). ATP is bound by residues 882–890 and lysine 908; that span reads IGSSNLSTV. Catalysis depends on aspartate 1013, which acts as the Proton acceptor.

This sequence belongs to the protein kinase superfamily. Ser/Thr protein kinase family. Interacts with SERK2.

It localises to the cell membrane. The catalysed reaction is L-seryl-[protein] + ATP = O-phospho-L-seryl-[protein] + ADP + H(+). The enzyme catalyses L-threonyl-[protein] + ATP = O-phospho-L-threonyl-[protein] + ADP + H(+). Constitutes the pattern-recognition receptor (PPR) that determines the specific perception of flagellin (flg22), a potent elicitor of the defense response to pathogen-associated molecular patterns (PAMPs). Recognizes flg22 from Pseudomonas aeruginosa and Acidovorax avenae. flg22 is a peptide derived from the bacterial flagellin N-terminus sequence. Does not recognize flg22 from Xanthomonas oryzae pv. oryzae (Xoo) or Xanthomonas oryzae pv. oryzicola (Xoc). In Oryza sativa subsp. japonica (Rice), this protein is LRR receptor-like serine/threonine-protein kinase FLS2.